A 131-amino-acid polypeptide reads, in one-letter code: MRHYEIVFMVHPDQSEQVPGMIERYSATITNAQGQIHRLEDWGRRQLAYPINKLHKAHYVLMNVEAPQEVIDELETNFRFNDAVIRSMIMRVKHAVTEASPMVKAKDERRSRDYSLEDANMDAEEAGDSEE.

The interval 100-131 (SPMVKAKDERRSRDYSLEDANMDAEEAGDSEE) is disordered. Basic and acidic residues predominate over residues 104–115 (KAKDERRSRDYS). A compositionally biased stretch (acidic residues) spans 119–131 (ANMDAEEAGDSEE).

Belongs to the bacterial ribosomal protein bS6 family.

Binds together with bS18 to 16S ribosomal RNA. In Photorhabdus laumondii subsp. laumondii (strain DSM 15139 / CIP 105565 / TT01) (Photorhabdus luminescens subsp. laumondii), this protein is Small ribosomal subunit protein bS6.